The primary structure comprises 255 residues: Adenosine 5'-phosphosulfate reductase (255 aa).

Residues 1 to 39 form a disordered region; the sequence is MMTAEVRTPEQGGGPLTTEPRAPRSAPGHADASAPAFGP. Residues Cys-137, Cys-138, Cys-220, and Cys-223 each contribute to the [4Fe-4S] cluster site. The active-site Nucleophile; cysteine thiosulfonate intermediate is Cys-246.

The protein belongs to the PAPS reductase family. CysH subfamily. [4Fe-4S] cluster is required as a cofactor.

It localises to the cytoplasm. It carries out the reaction [thioredoxin]-disulfide + sulfite + AMP + 2 H(+) = adenosine 5'-phosphosulfate + [thioredoxin]-dithiol. The protein operates within sulfur metabolism; hydrogen sulfide biosynthesis; sulfite from sulfate. Its function is as follows. Catalyzes the formation of sulfite from adenosine 5'-phosphosulfate (APS) using thioredoxin as an electron donor. The protein is Adenosine 5'-phosphosulfate reductase of Deinococcus radiodurans (strain ATCC 13939 / DSM 20539 / JCM 16871 / CCUG 27074 / LMG 4051 / NBRC 15346 / NCIMB 9279 / VKM B-1422 / R1).